The sequence spans 425 residues: MTQDGSAPANSAEHPWPVRSVSVKVMQWIDRLGSIWVEGQITQINLRPGARTAFLVLRDPSADMSLQVTCDPELIRRSPVPLQEGSRVVVYGKLVFFPARGSISLRVLEIRPVGVGELLARIERLKALLAAEGLFDERLKRPIPFLPKVVGLITGRGGAAEHDVLTVARNRWPAVRFEVRNTAVQGPTAVPQILTALAELDRHPEVEVIVLARGGGSVEDLLPFSDEALCRAIVAATTPIVSAIGHEPDNPLSDYVADLRAATPTDAAKRVVPDAAAELALVRELRARSAAALRGWVDREARALAQLRSRPVLADPLREIDRRATEIERLRADARRCVRHLIRTESTATAHLREKLTAVGPAATLARGYAVVQRVTGPERHVVRSIADSPAGSQLRIRVADGAVSAAALGTTAAGTRIADDTGGN.

It belongs to the XseA family. As to quaternary structure, heterooligomer composed of large and small subunits.

The protein resides in the cytoplasm. It carries out the reaction Exonucleolytic cleavage in either 5'- to 3'- or 3'- to 5'-direction to yield nucleoside 5'-phosphates.. Functionally, bidirectionally degrades single-stranded DNA into large acid-insoluble oligonucleotides, which are then degraded further into small acid-soluble oligonucleotides. This is Exodeoxyribonuclease 7 large subunit from Nocardia farcinica (strain IFM 10152).